We begin with the raw amino-acid sequence, 575 residues long: Proline--tRNA ligase (575 aa).

Belongs to the class-II aminoacyl-tRNA synthetase family. ProS type 1 subfamily. In terms of assembly, homodimer.

The protein localises to the cytoplasm. The catalysed reaction is tRNA(Pro) + L-proline + ATP = L-prolyl-tRNA(Pro) + AMP + diphosphate. Catalyzes the attachment of proline to tRNA(Pro) in a two-step reaction: proline is first activated by ATP to form Pro-AMP and then transferred to the acceptor end of tRNA(Pro). As ProRS can inadvertently accommodate and process non-cognate amino acids such as alanine and cysteine, to avoid such errors it has two additional distinct editing activities against alanine. One activity is designated as 'pretransfer' editing and involves the tRNA(Pro)-independent hydrolysis of activated Ala-AMP. The other activity is designated 'posttransfer' editing and involves deacylation of mischarged Ala-tRNA(Pro). The misacylated Cys-tRNA(Pro) is not edited by ProRS. In Saccharophagus degradans (strain 2-40 / ATCC 43961 / DSM 17024), this protein is Proline--tRNA ligase.